The sequence spans 54 residues: UPF0391 membrane protein Mfla_0947/Mfla_1091 (54 aa).

Transmembrane regions (helical) follow at residues 6–26 and 30–50; these read VIFF…IAAG and IAKI…VAGI.

Belongs to the UPF0391 family.

Its subcellular location is the cell membrane. This chain is UPF0391 membrane protein Mfla_0947/Mfla_1091, found in Methylobacillus flagellatus (strain ATCC 51484 / DSM 6875 / VKM B-1610 / KT).